A 231-amino-acid polypeptide reads, in one-letter code: Claudin-10 (231 aa).

The helical transmembrane segment at 1–21 threads the bilayer; sequence MASTASEIIAFMVSISGWVLV. Residues 22 to 80 are Extracellular-facing; that stretch reads SSTLPTDYWKVSTIDGTVITTATYWANLWKTCVTDSTGVSNCKDFPSMLALDGYIQACR. Residues 81 to 101 traverse the membrane as a helical segment; that stretch reads GLMIAAVSLGFFGSIFALIGM. Residues 102 to 115 are Cytoplasmic-facing; the sequence is KCTKVGGSDKAKAK. Residues 116–136 traverse the membrane as a helical segment; sequence IACLAGIVFILSGLCSMTGCS. Residues 137-160 lie on the Extracellular side of the membrane; sequence LYANKITTEFFDPLFVEQKYELGA. Residues 161–181 traverse the membrane as a helical segment; that stretch reads ALFIGWAGASLCLIGGVIFCF. Residues 182-231 lie on the Cytoplasmic side of the membrane; sequence SISDNNKAPRMGYTYNGATSVMSSRTKYHGREGDLKTPNPSKQFDKNAYV.

Belongs to the claudin family. As to quaternary structure, can form homodimers both in trans (interaction between CLDN10 molecules in opposing membranes) and in cis (interaction between CLDN10 molecules within one membrane). Interacts with CLDN19.

Its subcellular location is the cell junction. It is found in the tight junction. The protein resides in the cell membrane. The catalysed reaction is Na(+)(in) = Na(+)(out). It carries out the reaction Li(+)(in) = Li(+)(out). It catalyses the reaction K(+)(in) = K(+)(out). The enzyme catalyses Rb(+)(in) = Rb(+)(out). The catalysed reaction is Cs(+)(in) = Cs(+)(out). It carries out the reaction NH4(+)(in) = NH4(+)(out). It catalyses the reaction methylamine(out) = methylamine(in). The enzyme catalyses Mg(2+)(in) = Mg(2+)(out). The catalysed reaction is Ca(2+)(in) = Ca(2+)(out). It carries out the reaction Sr(2+)(in) = Sr(2+)(out). It catalyses the reaction chloride(in) = chloride(out). The enzyme catalyses nitrate(in) = nitrate(out). In terms of biological role, forms paracellular channels: polymerizes in tight junction strands with cation- and anion-selective channels through the strands, conveying epithelial permeability in a process known as paracellular tight junction permeability. In sweat glands and in the thick ascending limb (TAL) of Henle's loop in kidney, it controls paracellular sodium permeability which is essential for proper sweat production and renal function. In renal proximal tubules, it conveys selective chloride over hydrogencarbonate anion permeability which is required for renal chloride reabsorption and salt homeostasis. The chain is Claudin-10 (CLDN10) from Bos taurus (Bovine).